The sequence spans 518 residues: Ethanolamine kinase (518 aa).

Residues 1–19 are compositionally biased toward polar residues; the sequence is MGTETKSNSYTGQISTSGG. Positions 1 to 88 are disordered; it reads MGTETKSNSY…DIRAKPEDKS (88 aa). Low complexity predominate over residues 33-68; sequence QTVNQQTLSLSQSNQVQNQLNSHSNSNSYPNPSGSE. Basic and acidic residues predominate over residues 69–88; that stretch reads NKNENEQNSRDIRAKPEDKS. Phosphoserine is present on residues serine 190 and serine 194.

Belongs to the choline/ethanolamine kinase family.

It localises to the cytoplasm. The enzyme catalyses ethanolamine + ATP = phosphoethanolamine + ADP + H(+). The protein operates within phospholipid metabolism; phosphatidylethanolamine biosynthesis; phosphatidylethanolamine from ethanolamine: step 1/3. Functionally, highly specific for ethanolamine phosphorylation. May be a rate-controlling step in phosphatidylethanolamine biosynthesis. This chain is Ethanolamine kinase (eas), found in Drosophila melanogaster (Fruit fly).